The sequence spans 210 residues: Na(+)-translocating NADH-quinone reductase subunit D (210 aa).

5 consecutive transmembrane segments (helical) span residues 42–62, 72–92, 103–123, 131–151, and 178–198; these read FVMTLAVTAVTAFSNLFISLI, IIAQMAVIASLVIVVDQVLKA, VFVGLIITNCIVMGRAEAYAM, FLDGIGNGLGYGAVLLTVATV, and NGLLLLPPSAFFIIGLIIWGV.

This sequence belongs to the NqrDE/RnfAE family. In terms of assembly, composed of six subunits; NqrA, NqrB, NqrC, NqrD, NqrE and NqrF.

It is found in the cell inner membrane. It carries out the reaction a ubiquinone + n Na(+)(in) + NADH + H(+) = a ubiquinol + n Na(+)(out) + NAD(+). In terms of biological role, NQR complex catalyzes the reduction of ubiquinone-1 to ubiquinol by two successive reactions, coupled with the transport of Na(+) ions from the cytoplasm to the periplasm. NqrA to NqrE are probably involved in the second step, the conversion of ubisemiquinone to ubiquinol. In Aeromonas hydrophila subsp. hydrophila (strain ATCC 7966 / DSM 30187 / BCRC 13018 / CCUG 14551 / JCM 1027 / KCTC 2358 / NCIMB 9240 / NCTC 8049), this protein is Na(+)-translocating NADH-quinone reductase subunit D.